Consider the following 802-residue polypeptide: Leucine--tRNA ligase (802 aa).

A 'HIGH' region motif is present at residues 40–51 (PYPSGAGLHVGH). Residues 576–580 (KMSKS) carry the 'KMSKS' region motif. K579 is an ATP binding site.

The protein belongs to the class-I aminoacyl-tRNA synthetase family.

Its subcellular location is the cytoplasm. The catalysed reaction is tRNA(Leu) + L-leucine + ATP = L-leucyl-tRNA(Leu) + AMP + diphosphate. The chain is Leucine--tRNA ligase from Bacillus thuringiensis subsp. konkukian (strain 97-27).